Reading from the N-terminus, the 98-residue chain is NADH-ubiquinone oxidoreductase chain 4L (98 aa).

The next 3 helical transmembrane spans lie at 1–21 (MSLI…GLLM), 29–49 (ALLC…LTIL), and 61–81 (IILL…LVMI).

Belongs to the complex I subunit 4L family. Core subunit of respiratory chain NADH dehydrogenase (Complex I) which is composed of 45 different subunits.

It localises to the mitochondrion inner membrane. It catalyses the reaction a ubiquinone + NADH + 5 H(+)(in) = a ubiquinol + NAD(+) + 4 H(+)(out). Functionally, core subunit of the mitochondrial membrane respiratory chain NADH dehydrogenase (Complex I) which catalyzes electron transfer from NADH through the respiratory chain, using ubiquinone as an electron acceptor. Part of the enzyme membrane arm which is embedded in the lipid bilayer and involved in proton translocation. The sequence is that of NADH-ubiquinone oxidoreductase chain 4L (MT-ND4L) from Platanista minor (Indus river dolphin).